Here is a 290-residue protein sequence, read N- to C-terminus: ATP synthase gamma chain (290 aa).

It belongs to the ATPase gamma chain family. F-type ATPases have 2 components, CF(1) - the catalytic core - and CF(0) - the membrane proton channel. CF(1) has five subunits: alpha(3), beta(3), gamma(1), delta(1), epsilon(1). CF(0) has three main subunits: a, b and c.

The protein localises to the cell membrane. In terms of biological role, produces ATP from ADP in the presence of a proton gradient across the membrane. The gamma chain is believed to be important in regulating ATPase activity and the flow of protons through the CF(0) complex. The chain is ATP synthase gamma chain from Roseiflexus sp. (strain RS-1).